We begin with the raw amino-acid sequence, 295 residues long: Ribosomal protein L11 methyltransferase (295 aa).

Residues T146, G167, D189, and N231 each coordinate S-adenosyl-L-methionine.

This sequence belongs to the methyltransferase superfamily. PrmA family.

It is found in the cytoplasm. The enzyme catalyses L-lysyl-[protein] + 3 S-adenosyl-L-methionine = N(6),N(6),N(6)-trimethyl-L-lysyl-[protein] + 3 S-adenosyl-L-homocysteine + 3 H(+). Its function is as follows. Methylates ribosomal protein L11. The protein is Ribosomal protein L11 methyltransferase of Vibrio cholerae serotype O1 (strain ATCC 39541 / Classical Ogawa 395 / O395).